Consider the following 444-residue polypeptide: Gustatory receptor 5a for trehalose (444 aa).

Residues 1–56 (MRQLKGRNRCNRAVRHLKIQGKMWLKNLKSGLEQIRESQVRGTRKNFLHDGSFHEA) are Cytoplasmic-facing. Residues 57-77 (VAPVLAVAQCFCLMPVCGISA) form a helical membrane-spanning segment. Over 78 to 178 (PTYRGLSFNR…RARPARRLKL (101 aa)) the chain is Extracellular. Residues 179–199 (VAFVLLVVSLMEHLLSIISVV) traverse the membrane as a helical segment. Over 200-214 (YYDFCPRRSDPVESY) the chain is Cytoplasmic. Residues 215-235 (LLGASAQLFEVFPYSNWLAWL) form a helical membrane-spanning segment. Residues 236–240 (GKIQN) are Extracellular-facing. A helical membrane pass occupies residues 241-261 (VLLTFGWSYMDIFLMMLGMGL). Over 262-305 (SEMLARLNRSLEQQVRQPMPEAYWTWSRTLYRSIVELIREVDDA) the chain is Cytoplasmic. The chain crosses the membrane as a helical span at residues 306–326 (VSGIMLISFGSNLYFICLQLL). Over 327-338 (KSINTMPSSAHA) the chain is Extracellular. Residues 339–359 (VYFYFSLLFLLSRSTAVLLFV) traverse the membrane as a helical segment. At 360-410 (SAINDQAREPLRLLRLVPLKGYHPEVFRFAAELASDQVALTGLKFFNVTRK) the chain is on the cytoplasmic side. A helical membrane pass occupies residues 411–431 (LFLAMAGTVATYELVLIQFHE). Residues 432-444 (DKKTWDCSPFNLD) lie on the Extracellular side of the membrane.

The protein belongs to the insect chemoreceptor superfamily. Gustatory receptor (GR) family. Gr5a subfamily. As to expression, expressed in labellar chemosensory neurons.

The protein resides in the cell membrane. Its function is as follows. Gustatory receptor required for response to the sugar trehalose in taste neurons. Gr5a neurons selectively respond to sugars, in contrast to Gr66a cells which respond to bitter compounds. Flies are attracted to sugars and avoid bitter substances, suggesting that Gr5a neuron activity is sufficient to mediate acceptance behavior. Sugar signal transduction occurs through coupling with G-proteins such as Galpha49B and G-salpha60A. In Drosophila melanogaster (Fruit fly), this protein is Gustatory receptor 5a for trehalose (Gr5a).